A 338-amino-acid polypeptide reads, in one-letter code: Lipoyl synthase (338 aa).

Residues 1–24 are disordered; sequence MTTVQEAVPNLIPTQDATPRPAPK. [4Fe-4S] cluster contacts are provided by Cys-84, Cys-89, Cys-95, Cys-110, Cys-114, Cys-117, and Ser-324. The Radical SAM core domain occupies 96 to 313; sequence FSGGTATFMI…AEEGYKMGFK (218 aa).

Belongs to the radical SAM superfamily. Lipoyl synthase family. [4Fe-4S] cluster serves as cofactor.

Its subcellular location is the cytoplasm. It carries out the reaction [[Fe-S] cluster scaffold protein carrying a second [4Fe-4S](2+) cluster] + N(6)-octanoyl-L-lysyl-[protein] + 2 oxidized [2Fe-2S]-[ferredoxin] + 2 S-adenosyl-L-methionine + 4 H(+) = [[Fe-S] cluster scaffold protein] + N(6)-[(R)-dihydrolipoyl]-L-lysyl-[protein] + 4 Fe(3+) + 2 hydrogen sulfide + 2 5'-deoxyadenosine + 2 L-methionine + 2 reduced [2Fe-2S]-[ferredoxin]. The protein operates within protein modification; protein lipoylation via endogenous pathway; protein N(6)-(lipoyl)lysine from octanoyl-[acyl-carrier-protein]: step 2/2. Functionally, catalyzes the radical-mediated insertion of two sulfur atoms into the C-6 and C-8 positions of the octanoyl moiety bound to the lipoyl domains of lipoate-dependent enzymes, thereby converting the octanoylated domains into lipoylated derivatives. This Pseudomonas putida (strain ATCC 700007 / DSM 6899 / JCM 31910 / BCRC 17059 / LMG 24140 / F1) protein is Lipoyl synthase.